We begin with the raw amino-acid sequence, 353 residues long: Rhodopsin (353 aa).

Residues 1 to 36 (MNGTEGPYFYVPMVNTSGIVRSPYEYPQYYLVNPAA) lie on the Extracellular side of the membrane. N-linked (GlcNAc...) asparagine glycans are attached at residues Asn-2 and Asn-15. A helical transmembrane segment spans residues 37–61 (YARLGAYMFLLILVGFPINFLTLYV). Residues 62 to 73 (TIEHKKLRTPLN) lie on the Cytoplasmic side of the membrane. A helical transmembrane segment spans residues 74–96 (YILLNLAVADLFMVFGGFTTTMY). The Extracellular portion of the chain corresponds to 97–110 (TSMHGYFVLGRLGC). Cys-110 and Cys-187 are joined by a disulfide. Residues 111–133 (NIEGFFATLGGEIALWSLVVLAI) traverse the membrane as a helical segment. Positions 134-136 (ERW) match the 'Ionic lock' involved in activated form stabilization motif. The Cytoplasmic segment spans residues 134–152 (ERWVVVCKPISNFRFGENH). Residues 153 to 173 (AIMGLAFTWLMALACAAPPLV) form a helical membrane-spanning segment. Residues 174 to 202 (GWSRYIPEGMQCSCGIDYYTRAEGFNNES) are Extracellular-facing. A glycan (N-linked (GlcNAc...) asparagine) is linked at Asn-200. The helical transmembrane segment at 203–224 (FVIYMFVCHFTVPLMVVFFCYG) threads the bilayer. The Cytoplasmic segment spans residues 225–252 (RLLCAVKEAAAAQQESETTQRAEREVTR). A helical membrane pass occupies residues 253-274 (MVIMMVVAFLVCWLPYASVAWW). Residues 275-286 (IFTHQGSEFGPV) lie on the Extracellular side of the membrane. The helical transmembrane segment at 287–308 (FMTIPAFFAKSSSIYNPMIYIC) threads the bilayer. Position 296 is an N6-(retinylidene)lysine (Lys-296). At 309–353 (LNKQFRHCMITTLCCGKNPFEEEEGASTASKTEASSVSSSSVSPA) the chain is on the cytoplasmic side. S-palmitoyl cysteine attachment occurs at residues Cys-322 and Cys-323. Residues 331–353 (EEGASTASKTEASSVSSSSVSPA) form a disordered region. The span at 334–353 (ASTASKTEASSVSSSSVSPA) shows a compositional bias: low complexity.

The protein belongs to the G-protein coupled receptor 1 family. Opsin subfamily. In terms of processing, phosphorylated on some or all of the serine and threonine residues present in the C-terminal region. Post-translationally, contains one covalently linked retinal chromophore.

The protein localises to the membrane. It is found in the cell projection. The protein resides in the cilium. It localises to the photoreceptor outer segment. In terms of biological role, photoreceptor required for image-forming vision at low light intensity. While most salt water fish species use retinal as chromophore, most freshwater fish use 3-dehydroretinal, or a mixture of retinal and 3-dehydroretinal. Light-induced isomerization of 11-cis to all-trans retinal triggers a conformational change that activates signaling via G-proteins. Subsequent receptor phosphorylation mediates displacement of the bound G-protein alpha subunit by arrestin and terminates signaling. The sequence is that of Rhodopsin (rho) from Sarpa salpa (Salema).